We begin with the raw amino-acid sequence, 291 residues long: Ribosomal RNA small subunit methyltransferase A (291 aa).

S-adenosyl-L-methionine is bound by residues histidine 37, leucine 39, glycine 64, glutamate 85, aspartate 110, and asparagine 131.

It belongs to the class I-like SAM-binding methyltransferase superfamily. rRNA adenine N(6)-methyltransferase family. RsmA subfamily.

It is found in the cytoplasm. It carries out the reaction adenosine(1518)/adenosine(1519) in 16S rRNA + 4 S-adenosyl-L-methionine = N(6)-dimethyladenosine(1518)/N(6)-dimethyladenosine(1519) in 16S rRNA + 4 S-adenosyl-L-homocysteine + 4 H(+). In terms of biological role, specifically dimethylates two adjacent adenosines (A1518 and A1519) in the loop of a conserved hairpin near the 3'-end of 16S rRNA in the 30S particle. May play a critical role in biogenesis of 30S subunits. In Dehalococcoides mccartyi (strain ATCC BAA-2100 / JCM 16839 / KCTC 5957 / BAV1), this protein is Ribosomal RNA small subunit methyltransferase A.